Reading from the N-terminus, the 122-residue chain is Non-specific lipid-transfer protein (122 aa).

The signal sequence occupies residues 1 to 19; it reads MGVSRACFVVMVVVYMVVA. The propeptide occupies 20 to 29; it reads ATPNVKLAEA. Cystine bridges form between cysteine 32/cysteine 81, cysteine 42/cysteine 58, cysteine 59/cysteine 104, and cysteine 79/cysteine 118.

Monomer.

Functionally, plant non-specific lipid-transfer proteins transfer phospholipids as well as galactolipids across membranes. May play a role in wax or cutin deposition in the cell walls of expanding epidermal cells and certain secretory tissues. Binds saturated fatty acids, unsaturated fatty acids, lysolipids and, with highest efficiency, jasmonic acid. Has weak antimicrobial activity against fungi. Inhibits spore germination and hyphae elongation in A.niger VKM F-2259 and N.crassa VKM F-184. Has no antibacterial activity against A.tumefaciens A281, C.michiganensis VKM Ac-144 and P.syringae VKM B-1546. This chain is Non-specific lipid-transfer protein, found in Anethum graveolens (Dill).